Consider the following 203-residue polypeptide: Pyridoxal 5'-phosphate synthase subunit PdxT (203 aa).

49–51 (GES) is a binding site for L-glutamine. C81 functions as the Nucleophile in the catalytic mechanism. L-glutamine contacts are provided by residues R110 and 139 to 140 (IR). Residues H175 and E177 each act as charge relay system in the active site.

The protein belongs to the glutaminase PdxT/SNO family. In terms of assembly, in the presence of PdxS, forms a dodecamer of heterodimers. Only shows activity in the heterodimer.

It catalyses the reaction aldehydo-D-ribose 5-phosphate + D-glyceraldehyde 3-phosphate + L-glutamine = pyridoxal 5'-phosphate + L-glutamate + phosphate + 3 H2O + H(+). The catalysed reaction is L-glutamine + H2O = L-glutamate + NH4(+). It participates in cofactor biosynthesis; pyridoxal 5'-phosphate biosynthesis. Catalyzes the hydrolysis of glutamine to glutamate and ammonia as part of the biosynthesis of pyridoxal 5'-phosphate. The resulting ammonia molecule is channeled to the active site of PdxS. This chain is Pyridoxal 5'-phosphate synthase subunit PdxT, found in Parafrankia sp. (strain EAN1pec).